The sequence spans 130 residues: ATP synthase epsilon chain, chloroplastic (130 aa).

Belongs to the ATPase epsilon chain family. As to quaternary structure, F-type ATPases have 2 components, CF(1) - the catalytic core - and CF(0) - the membrane proton channel. CF(1) has five subunits: alpha(3), beta(3), gamma(1), delta(1), epsilon(1). CF(0) has three main subunits: a, b and c.

The protein resides in the plastid. It is found in the chloroplast thylakoid membrane. In terms of biological role, produces ATP from ADP in the presence of a proton gradient across the membrane. The polypeptide is ATP synthase epsilon chain, chloroplastic (Tupiella akineta (Green alga)).